The sequence spans 452 residues: Septin-10 (452 aa).

The 267-residue stretch at 36–302 folds into the Septin-type G domain; it reads QGFCFNILCV…ELYRRCKLQE (267 aa). A G1 motif region spans residues 46–53; it reads GETGIGKS. Residues 46 to 53, G101, 182 to 190, G236, and R251 contribute to the GTP site; these read GETGIGKS and KADTISKSE. A G3 motif region spans residues 98–101; that stretch reads NTVG. Residues 181–184 form a G4 motif region; the sequence is AKAD. S414 carries the phosphoserine modification.

It belongs to the TRAFAC class TrmE-Era-EngA-EngB-Septin-like GTPase superfamily. Septin GTPase family. Septins polymerize into heterooligomeric protein complexes that form filaments, and can associate with cellular membranes, actin filaments and microtubules. GTPase activity is required for filament formation. Interacts with ADGB. Proteolytically cleaved in vitro in a calmodulin-dependent manner.

Its subcellular location is the cytoplasm. It localises to the cytoskeleton. The protein resides in the cell projection. The protein localises to the cilium. It is found in the flagellum. In terms of biological role, filament-forming cytoskeletal GTPase. May play a role in cytokinesis (Potential). In Mus musculus (Mouse), this protein is Septin-10.